The following is a 568-amino-acid chain: Zinc finger protein 76 (568 aa).

Lysine 24 is covalently cross-linked (Glycyl lysine isopeptide (Lys-Gly) (interchain with G-Cter in SUMO2)). Repeat copies occupy residues 34–45, 62–73, and 88–99. Positions 34–99 are 3 X 12 AA approximate repeats; that stretch reads IQLEDGTTAY…LEDGSTAYIH (66 aa). C2H2-type zinc fingers lie at residues 165–189, 195–219, 225–249, 255–279, 285–309, 315–339, and 345–368; these read FRCG…ERAH, YRCD…VRTH, YKCP…VRTH, FRCP…VRTH, YTCP…VRIH, YVCT…HVVH, and YTCS…RSAH. The interval 365–402 is disordered; the sequence is RSAHGELEATEESEQALYEQQQLEAASAAEESPPPKPT. A compositionally biased stretch (low complexity) spans 379-395; the sequence is QALYEQQQLEAASAAEE.

Belongs to the krueppel C2H2-type zinc-finger protein family.

It localises to the nucleus. May be involved in transcriptional regulation. This chain is Zinc finger protein 76 (Znf76), found in Mus musculus (Mouse).